We begin with the raw amino-acid sequence, 33 residues long: ATP synthase 27 kDa subunit, mitochondrial (33 aa).

It localises to the mitochondrion. Its subcellular location is the mitochondrion inner membrane. In terms of biological role, mitochondrial membrane ATP synthase (F(1)F(0) ATP synthase or Complex V) produces ATP from ADP in the presence of a proton gradient across the membrane which is generated by electron transport complexes of the respiratory chain. F-type ATPases consist of two structural domains, F(1) - containing the extramembraneous catalytic core and F(0) - containing the membrane proton channel, linked together by a central stalk and a peripheral stalk. During catalysis, ATP synthesis in the catalytic domain of F(1) is coupled via a rotary mechanism of the central stalk subunits to proton translocation. Part of the complex F(0) domain. In Solanum tuberosum (Potato), this protein is ATP synthase 27 kDa subunit, mitochondrial.